The sequence spans 403 residues: S-adenosylmethionine sensor upstream of mTORC1 (403 aa).

A compositionally biased stretch (gly residues) spans Met-1–Ala-10. Residues Met-1–Glu-32 form a disordered region. The span at Ala-11 to Pro-22 shows a compositional bias: low complexity. Basic and acidic residues predominate over residues Arg-23–Glu-32. S-adenosyl-L-methionine is bound by residues Arg-93, Gly-170, Asp-188, Asp-200, Phe-201, and Ser-242.

This sequence belongs to the BMT2/SAMTOR family. In terms of assembly, interacts with the GATOR1 complex; interaction is disrupted when SAMTOR binds S-adenosyl-L-methionine. Interacts with the KICSTOR complex; interaction is disrupted when SAMTOR binds S-adenosyl-L-methionine.

Functionally, S-adenosyl-L-methionine-binding protein that acts as an inhibitor of mTORC1 signaling via interaction with the GATOR1 and KICSTOR complexes. Acts as a sensor of S-adenosyl-L-methionine to signal methionine sufficiency to mTORC1: in presence of methionine, binds S-adenosyl-L-methionine, leading to disrupt interaction with the GATOR1 and KICSTOR complexes and promote mTORC1 signaling. Upon methionine starvation, S-adenosyl-L-methionine levels are reduced, thereby promoting the association with GATOR1 and KICSTOR, leading to inhibit mTORC1 signaling. Probably also acts as a S-adenosyl-L-methionine-dependent methyltransferase. In Mus musculus (Mouse), this protein is S-adenosylmethionine sensor upstream of mTORC1.